The chain runs to 836 residues: Translation initiation factor IF-2 (836 aa).

The segment at 1 to 233 is disordered; the sequence is MSDTDGKKPL…RSLAAMKRKQ (233 aa). The segment covering 18–27 has biased composition (polar residues); it reads SGQVKQSFSH. Residues 50–60 are compositionally biased toward low complexity; it reads SGSSTTTSSPS. Positions 88–156 are enriched in basic and acidic residues; sequence KLREVEDAKR…AARRAEEAKR (69 aa). Residues 167-176 show a composition bias toward low complexity; the sequence is PAESRASAPP. Residues 185 to 206 show a composition bias toward basic and acidic residues; sequence SRKEREREADRDRTTKKDDSRR. The region spanning 333-501 is the tr-type G domain; it reads PRPPIITIMG…NIALQAEILD (169 aa). Residues 342-349 are G1; that stretch reads GHVDHGKT. 342–349 is a binding site for GTP; that stretch reads GHVDHGKT. Residues 367–371 form a G2 region; sequence GITQH. The segment at 389-392 is G3; the sequence is DTPG. GTP-binding positions include 389–393 and 443–446; these read DTPGH and NKID. The interval 443 to 446 is G4; sequence NKID. The G5 stretch occupies residues 479–481; the sequence is SAK.

This sequence belongs to the TRAFAC class translation factor GTPase superfamily. Classic translation factor GTPase family. IF-2 subfamily.

It is found in the cytoplasm. In terms of biological role, one of the essential components for the initiation of protein synthesis. Protects formylmethionyl-tRNA from spontaneous hydrolysis and promotes its binding to the 30S ribosomal subunits. Also involved in the hydrolysis of GTP during the formation of the 70S ribosomal complex. The protein is Translation initiation factor IF-2 of Cereibacter sphaeroides (strain ATCC 17023 / DSM 158 / JCM 6121 / CCUG 31486 / LMG 2827 / NBRC 12203 / NCIMB 8253 / ATH 2.4.1.) (Rhodobacter sphaeroides).